The chain runs to 657 residues: Broad substrate specificity ATP-binding cassette transporter ABCG2 (657 aa).

The disordered stretch occupies residues 1–25 (MSSSNDHVLVPMSQRNKNGLPGMSS). Residues 1-395 (MSSSNDHVLV…KNLLGNPQAS (395 aa)) are Cytoplasmic-facing. The 238-residue stretch at 48–285 (VKSGFLVRKT…FASAGYHCEP (238 aa)) folds into the ABC transporter domain. Residues 79 to 86 (GPTGGGKS), 183 to 189 (RGISGGE), Glu-210, and His-242 each bind ATP. One can recognise an ABC transmembrane type-2 domain in the interval 389 to 653 (LGNPQASVAQ…TIAYLKLLFL (265 aa)). The helical transmembrane segment at 396–416 (VAQLIVTVILGLIIGALYFGL) threads the bilayer. Residues 417-428 (KNDPTGMQNRAG) lie on the Extracellular side of the membrane. The helical transmembrane segment at 429-449 (VFFFLTTNQCFTSVSAVELFV) threads the bilayer. At 450–477 (VEKKLFIHEYISGYYRVSSYFFGKLVSD) the chain is on the cytoplasmic side. The helical transmembrane segment at 478–498 (LLPMRFLPSVIYTCILYFMLG) threads the bilayer. The Extracellular portion of the chain corresponds to 499–506 (LKRTVEAF). Residues 507 to 527 (FIMMFTLIMVAYTASSMALAI) traverse the membrane as a helical segment. Residues 528–535 (AAGQSVVS) lie on the Cytoplasmic side of the membrane. Residues 536–556 (VATLLMTISFVFMMLFSGLLV) form a helical membrane-spanning segment. At 557 to 632 (NLRTIGPWLS…LSPWGLWRNH (76 aa)) the chain is on the extracellular side. Cys-592 and Cys-610 are disulfide-bonded. 2 N-linked (GlcNAc...) asparagine glycosylation sites follow: Asn-596 and Asn-600. A helical membrane pass occupies residues 633-653 (VALACMIIIFLTIAYLKLLFL). At 654 to 657 (KKYS) the chain is on the cytoplasmic side.

Belongs to the ABC transporter superfamily. ABCG family. Eye pigment precursor importer (TC 3.A.1.204) subfamily. Homodimer; disulfide-linked. The minimal functional unit is a homodimer, but the major oligomeric form in plasma membrane is a homotetramer with possibility of higher order oligomerization up to homododecamers. In terms of processing, N-glycosylated in brain capillary, kidney and small intestine but not in heart. N-glycosylated. Glycosylation-deficient ABCG2 is normally expressed and functional. Post-translationally, phosphorylated. Phosphorylation may regulate the localization to the plasma membrane, the homooligomerization and therefore, the activity of the transporter. As to expression, highly expressed in brain capillary, kidney and small intestine. Lower expression in heart. Preferentially expressed (at protein level) on the luminal membrane of brain capillaries, in kidney and small intestine.

It is found in the cell membrane. Its subcellular location is the apical cell membrane. The protein resides in the mitochondrion membrane. The enzyme catalyses ATP + H2O + xenobioticSide 1 = ADP + phosphate + xenobioticSide 2.. The catalysed reaction is urate(in) + ATP + H2O = urate(out) + ADP + phosphate + H(+). It catalyses the reaction indoxyl sulfate(in) + ATP + H2O = indoxyl sulfate(out) + ADP + phosphate + H(+). It carries out the reaction sphing-4-enine 1-phosphate(in) + ATP + H2O = sphing-4-enine 1-phosphate(out) + ADP + phosphate + H(+). The enzyme catalyses estrone 3-sulfate(in) + ATP + H2O = estrone 3-sulfate(out) + ADP + phosphate + H(+). The catalysed reaction is dehydroepiandrosterone 3-sulfate(in) + ATP + H2O = dehydroepiandrosterone 3-sulfate(out) + ADP + phosphate + H(+). It catalyses the reaction 4-methylumbelliferone sulfate(in) + ATP + H2O = 4-methylumbelliferone sulfate(out) + ADP + phosphate + H(+). It carries out the reaction 5,7-dimethyl-2-methylamino-4-(3-pyridylmethyl)-1,3-benzothiazol-6-yl beta-D-glucuronate(in) + ATP + H2O = 5,7-dimethyl-2-methylamino-4-(3-pyridylmethyl)-1,3-benzothiazol-6-yl beta-D-glucuronate(out) + ADP + phosphate + H(+). The enzyme catalyses 4-methylumbelliferone beta-D-glucuronate(in) + ATP + H2O = 4-methylumbelliferone beta-D-glucuronate(out) + ADP + phosphate + H(+). The catalysed reaction is 5,7-dimethyl-2-methylamino-4-(3-pyridylmethyl)-1,3-benzothiazol-6-yl sulfate(in) + ATP + H2O = 5,7-dimethyl-2-methylamino-4-(3-pyridylmethyl)-1,3-benzothiazol-6-yl sulfate(out) + ADP + phosphate + H(+). It catalyses the reaction 17beta-estradiol 17-O-(beta-D-glucuronate)(in) + ATP + H2O = 17beta-estradiol 17-O-(beta-D-glucuronate)(out) + ADP + phosphate + H(+). It carries out the reaction methotrexate(in) + ATP + H2O = methotrexate(out) + ADP + phosphate + H(+). The enzyme catalyses riboflavin(in) + ATP + H2O = riboflavin(out) + ADP + phosphate + H(+). The catalysed reaction is pheophorbide a(in) + ATP + H2O = pheophorbide a(out) + ADP + phosphate + H(+). It catalyses the reaction itaconate(in) + ATP + H2O = itaconate(out) + ADP + phosphate + H(+). Functionally, broad substrate specificity ATP-dependent transporter of the ATP-binding cassette (ABC) family that actively extrudes a wide variety of physiological compounds, dietary toxins and xenobiotics from cells. Involved in porphyrin homeostasis, mediating the export of protoporphyrin IX (PPIX) from both mitochondria to cytosol and cytosol to extracellular space, it also functions in the cellular export of heme. Also mediates the efflux of sphingosine-1-P from cells. Acts as a urate exporter functioning in both renal and extrarenal urate excretion. In kidney, it also functions as a physiological exporter of the uremic toxin indoxyl sulfate. Also involved in the excretion of steroids like estrone 3-sulfate/E1S, 3beta-sulfooxy-androst-5-en-17-one/DHEAS, and other sulfate conjugates. Mediates the secretion of the riboflavin and biotin vitamins into milk. Extrudes pheophorbide a, a phototoxic porphyrin catabolite of chlorophyll, reducing its bioavailability. Plays an important role in the exclusion of xenobiotics from the brain. It confers to cells a resistance to multiple drugs and other xenobiotics including mitoxantrone, pheophorbide, camptothecin, methotrexate, azidothymidine, and the anthracyclines daunorubicin and doxorubicin, through the control of their efflux. In placenta, it limits the penetration of drugs from the maternal plasma into the fetus. May play a role in early stem cell self-renewal by blocking differentiation. In inflammatory macrophages, exports itaconate from the cytosol to the extracellular compartment and limits the activation of TFEB-dependent lysosome biogenesis involved in antibacterial innate immune response. The sequence is that of Broad substrate specificity ATP-binding cassette transporter ABCG2 (Abcg2) from Rattus norvegicus (Rat).